Here is a 446-residue protein sequence, read N- to C-terminus: Glucose-1-phosphate adenylyltransferase (446 aa).

Alpha-D-glucose 1-phosphate contacts are provided by residues tyrosine 119, glycine 184, 199 to 200 (EK), and serine 217.

It belongs to the bacterial/plant glucose-1-phosphate adenylyltransferase family. Homotetramer.

The enzyme catalyses alpha-D-glucose 1-phosphate + ATP + H(+) = ADP-alpha-D-glucose + diphosphate. Its pathway is glycan biosynthesis; glycogen biosynthesis. In terms of biological role, involved in the biosynthesis of ADP-glucose, a building block required for the elongation reactions to produce glycogen. Catalyzes the reaction between ATP and alpha-D-glucose 1-phosphate (G1P) to produce pyrophosphate and ADP-Glc. The polypeptide is Glucose-1-phosphate adenylyltransferase (Rhodopirellula baltica (strain DSM 10527 / NCIMB 13988 / SH1)).